Here is a 188-residue protein sequence, read N- to C-terminus: ATP synthase subunit b (188 aa).

The helical transmembrane segment at Thr-7–Asp-26 threads the bilayer.

It belongs to the ATPase B chain family. In terms of assembly, F-type ATPases have 2 components, F(1) - the catalytic core - and F(0) - the membrane proton channel. F(1) has five subunits: alpha(3), beta(3), gamma(1), delta(1), epsilon(1). F(0) has three main subunits: a(1), b(2) and c(10-14). The alpha and beta chains form an alternating ring which encloses part of the gamma chain. F(1) is attached to F(0) by a central stalk formed by the gamma and epsilon chains, while a peripheral stalk is formed by the delta and b chains.

It is found in the cell inner membrane. F(1)F(0) ATP synthase produces ATP from ADP in the presence of a proton or sodium gradient. F-type ATPases consist of two structural domains, F(1) containing the extramembraneous catalytic core and F(0) containing the membrane proton channel, linked together by a central stalk and a peripheral stalk. During catalysis, ATP synthesis in the catalytic domain of F(1) is coupled via a rotary mechanism of the central stalk subunits to proton translocation. Functionally, component of the F(0) channel, it forms part of the peripheral stalk, linking F(1) to F(0). This chain is ATP synthase subunit b, found in Nitratidesulfovibrio vulgaris (strain DP4) (Desulfovibrio vulgaris).